A 353-amino-acid chain; its full sequence is Tsukushi (353 aa).

An N-terminal signal peptide occupies residues 1-17; the sequence is MLCTLFLLLLALGIVQT. The LRRNT domain occupies 18 to 59; the sequence is TRPCFPGCQCEEETFGLFDSFSLIRVDCSSLGPHIVPVPIPL. 10 LRR repeats span residues 60–80, 86–107, 110–131, 133–154, 160–180, 186–207, 208–228, 231–253, 256–277, and 281–302; these read DTAH…SVLG, TLAG…AFSR, YLES…VFTS, PLSD…AFTT, ALHV…PARA, TIQS…RDLP, LRYL…AFMG, GLTH…GFRE, GLQV…EVFS, and LLQE…LLHH. N-linked (GlcNAc...) asparagine glycosylation occurs at N75. N138 is a glycosylation site (N-linked (GlcNAc...) asparagine). Residue N191 is glycosylated (N-linked (GlcNAc...) asparagine).

As to quaternary structure, interacts with FZD4 (via FZ domain); competes with WNT2B for binding to FZD4, inhibiting Wnt signaling and repressing peripheral eye development. Interacts with TGFB1; the interaction contributes to regulation of the hair cycle. Interacts with netrin. Interacts with CCN2. As to expression, expressed at high levels in the liver, small intestine and placenta. Not or barely detectable in other tissues, including whole pancreas, adipose tissues, skeletal muscle, kidney, spleen, brain, lung and testis.

The protein resides in the secreted. Contributes to various developmental events and other processes such as wound healing and cholesterol homeostasis through its interactions with multiple signaling pathways. Wnt signaling inhibitor which competes with WNT2B for binding to Wnt receptor FZD4 and represses WNT2B-dependent development of the peripheral eye. Plays a role in regulating the hair cycle by controlling TGFB1 signaling. Required for the development of the anterior commissure in the brain by inhibiting neurite outgrowth. Essential for terminal differentiation of hippocampal neural stem cells. Plays a role in regulating bone elongation and bone mass by modulating growth plate chondrocyte function and overall body size. Required for development of the inner ear through its involvement in stereocilia formation in inner hair cells. Facilitates wound healing by inhibiting secretion of TGFB1 from macrophages which prevents myofibroblast differentiation, maintaining inflammatory cell quiescence. Plays a role in cholesterol homeostasis by reducing circulating high-density lipoprotein cholesterol, lowering cholesterol efflux capacity and decreasing cholesterol-to-bile acid conversion in the liver. In one study, shown to negatively regulate sympathetic innervation in brown fat, leading to reduced energy expenditure. In another study, shown not to affect brown fat thermogenic capacity, body weight gain or glucose homeostasis. This is Tsukushi (Tsku) from Rattus norvegicus (Rat).